We begin with the raw amino-acid sequence, 288 residues long: Bifunctional protein FolD (288 aa).

NADP(+) contacts are provided by residues 164 to 166 (GTS) and isoleucine 230.

The protein belongs to the tetrahydrofolate dehydrogenase/cyclohydrolase family. Homodimer.

The enzyme catalyses (6R)-5,10-methylene-5,6,7,8-tetrahydrofolate + NADP(+) = (6R)-5,10-methenyltetrahydrofolate + NADPH. The catalysed reaction is (6R)-5,10-methenyltetrahydrofolate + H2O = (6R)-10-formyltetrahydrofolate + H(+). The protein operates within one-carbon metabolism; tetrahydrofolate interconversion. Its function is as follows. Catalyzes the oxidation of 5,10-methylenetetrahydrofolate to 5,10-methenyltetrahydrofolate and then the hydrolysis of 5,10-methenyltetrahydrofolate to 10-formyltetrahydrofolate. This chain is Bifunctional protein FolD, found in Mycoplasma mycoides subsp. mycoides SC (strain CCUG 32753 / NCTC 10114 / PG1).